Consider the following 326-residue polypeptide: Trans-L-3-hydroxyproline dehydratase (326 aa).

The Proton acceptor role is filled by cysteine 80. Residues 81-82, aspartate 241, and 246-247 contribute to the substrate site; these read GH and GS.

This sequence belongs to the proline racemase family. As to quaternary structure, homodimer.

It catalyses the reaction trans-3-hydroxy-L-proline = 1-pyrroline-2-carboxylate + H2O. Its function is as follows. Catalyzes the dehydration of trans-3-hydroxy-L-proline to delta-1-pyrroline-2-carboxylate (Pyr2C). This Saccoglossus kowalevskii (Acorn worm) protein is Trans-L-3-hydroxyproline dehydratase (l3hypdh).